The primary structure comprises 465 residues: 3-isopropylmalate dehydratase large subunit (465 aa).

Residues Cys-347, Cys-407, and Cys-410 each coordinate [4Fe-4S] cluster.

It belongs to the aconitase/IPM isomerase family. LeuC type 1 subfamily. As to quaternary structure, heterodimer of LeuC and LeuD. The cofactor is [4Fe-4S] cluster.

The enzyme catalyses (2R,3S)-3-isopropylmalate = (2S)-2-isopropylmalate. The protein operates within amino-acid biosynthesis; L-leucine biosynthesis; L-leucine from 3-methyl-2-oxobutanoate: step 2/4. Catalyzes the isomerization between 2-isopropylmalate and 3-isopropylmalate, via the formation of 2-isopropylmaleate. This Buchnera aphidicola subsp. Pemphigus spyrothecae protein is 3-isopropylmalate dehydratase large subunit.